A 196-amino-acid polypeptide reads, in one-letter code: Putative NADH dehydrogenase/NAD(P)H nitroreductase Rpal_4764 (196 aa).

Belongs to the nitroreductase family. HadB/RutE subfamily. It depends on FMN as a cofactor.

This Rhodopseudomonas palustris (strain TIE-1) protein is Putative NADH dehydrogenase/NAD(P)H nitroreductase Rpal_4764.